A 289-amino-acid chain; its full sequence is N-acetylmuramoyl-L-alanine amidase AmiA (289 aa).

The tat-type signal signal peptide spans 1–34 (MSTFKPLKTLTSRRQVLKAGLAALTLSGMSQAIA). The disordered stretch occupies residues 39–63 (LKTSNGHSKPKAKKSGGKRVVVLDP). Residues 46–55 (SKPKAKKSGG) show a composition bias toward basic residues. Residues 59-273 (VVLDPGHGGI…IATAIAEGVI (215 aa)) enclose the MurNAc-LAA domain.

It belongs to the N-acetylmuramoyl-L-alanine amidase 3 family. Exported by the Tat system. The position of the signal peptide cleavage has not been experimentally proven. Can also be exported by the Sec system.

The protein localises to the periplasm. It carries out the reaction Hydrolyzes the link between N-acetylmuramoyl residues and L-amino acid residues in certain cell-wall glycopeptides.. Its function is as follows. Cell-wall hydrolase involved in septum cleavage during cell division. Can also act as powerful autolysin in the presence of murein synthesis inhibitors. This Escherichia coli (strain K12) protein is N-acetylmuramoyl-L-alanine amidase AmiA (amiA).